The chain runs to 264 residues: NADH-quinone oxidoreductase subunit B 1 (264 aa).

[4Fe-4S] cluster-binding residues include Cys42, Cys43, Cys108, and Cys138.

This sequence belongs to the complex I 20 kDa subunit family. In terms of assembly, NDH-1 is composed of 14 different subunits. Subunits NuoB, C, D, E, F, and G constitute the peripheral sector of the complex. [4Fe-4S] cluster serves as cofactor.

It is found in the cell membrane. The catalysed reaction is a quinone + NADH + 5 H(+)(in) = a quinol + NAD(+) + 4 H(+)(out). Its function is as follows. NDH-1 shuttles electrons from NADH, via FMN and iron-sulfur (Fe-S) centers, to quinones in the respiratory chain. The immediate electron acceptor for the enzyme in this species is believed to be ubiquinone. Couples the redox reaction to proton translocation (for every two electrons transferred, four hydrogen ions are translocated across the cytoplasmic membrane), and thus conserves the redox energy in a proton gradient. The protein is NADH-quinone oxidoreductase subunit B 1 of Chloroflexus aurantiacus (strain ATCC 29366 / DSM 635 / J-10-fl).